The sequence spans 1910 residues: C2 domain-containing protein (1910 aa).

Positions 1 to 28 (MMKLKEMVEAAEAKVESKPPQAAEEKAP) are enriched in basic and acidic residues. Disordered stretches follow at residues 1–54 (MMKL…EPLD), 355–377 (AMKL…PEDG), and 398–428 (LEEL…DGPQ). Basic and acidic residues predominate over residues 414-423 (KGEDKKDGNK). Residues 557-678 (QLGEVSESDS…FFNEKHNKRN (122 aa)) form the C2 domain. 2 stretches are compositionally biased toward basic and acidic residues: residues 1192 to 1205 (LAQK…DAQR) and 1215 to 1228 (GHEG…DKQG). 6 disordered regions span residues 1192–1267 (LAQK…VKKG), 1405–1424 (ATAG…RDMQ), 1431–1654 (LEEA…SMGA), 1666–1747 (QRKH…FLSS), 1822–1841 (AKEE…DWSD), and 1879–1910 (DACS…AGRT). Composition is skewed to low complexity over residues 1239–1257 (AAAA…VQGA) and 1405–1414 (ATAGEGEQQT). The span at 1440-1469 (KKKKKKEKKEKKEKKEKKEKKEKKEKKKKK) shows a compositional bias: basic residues. Over residues 1492-1502 (PAAAIPSVLLP) the composition is skewed to low complexity. Residues 1517-1526 (KKEKKEKKKK) are compositionally biased toward basic residues. The segment covering 1550–1561 (PAAAIPSILLPA) has biased composition (low complexity). A compositionally biased stretch (basic and acidic residues) spans 1569–1584 (EKPKEKKTEKKKEKHT). Residues 1595–1604 (LPESETTAVV) show a composition bias toward polar residues. Low complexity-rich tracts occupy residues 1620–1629 (VPSSIASSEA) and 1675–1698 (SSSS…SSSS). The segment covering 1701–1711 (AETRAKADALR) has biased composition (basic and acidic residues). 2 stretches are compositionally biased toward low complexity: residues 1712 to 1722 (ARLQAAQARLA) and 1729 to 1747 (VSSS…FLSS). A coiled-coil region spans residues 1766–1828 (QQRLQKMVSG…TRRAKEEKDL (63 aa)). The segment covering 1890–1904 (ESRTTAGAKLRQQQL) has biased composition (polar residues).

It localises to the membrane. Regulates microneme secretion. Probably involved in regulation of rhoptry and dense granule secretion. This chain is C2 domain-containing protein, found in Toxoplasma gondii.